A 736-amino-acid polypeptide reads, in one-letter code: 3',5'-cyclic-AMP phosphodiesterase 4B (736 aa).

Disordered regions lie at residues glutamine 51–leucine 77 and aspartate 96–serine 116. Serine 56 is modified (phosphoserine). The residue at position 290 (serine 290) is a Phosphoserine. The region spanning valine 330–serine 659 is the PDEase domain. Residue histidine 406 is the Proton donor of the active site. A 3',5'-cyclic AMP-binding site is contributed by histidine 406. AMP is bound by residues histidine 406 and histidine 410. 4 residues coordinate Zn(2+): histidine 410, histidine 446, aspartate 447, and aspartate 564. AMP contacts are provided by aspartate 447, aspartate 564, glutamine 615, and phenylalanine 618. Aspartate 447 is a Mg(2+) binding site. Aspartate 447 is a Mn(2+) binding site. Residues glutamine 615 and phenylalanine 618 each coordinate 3',5'-cyclic AMP. A phosphoserine mark is found at serine 659 and serine 661. Positions glutamate 685–threonine 736 are disordered.

The protein belongs to the cyclic nucleotide phosphodiesterase family. PDE4 subfamily. As to quaternary structure, interacts with DISC1. It depends on Zn(2+) as a cofactor. Requires Mg(2+) as cofactor. Mn(2+) is required as a cofactor. As to expression, widely expressed. In terms of tissue distribution, expressed in brain, heart, lung and liver. Expressed in liver and brain.

It is found in the cytoplasm. The protein resides in the cell membrane. It carries out the reaction 3',5'-cyclic AMP + H2O = AMP + H(+). It participates in purine metabolism; 3',5'-cyclic AMP degradation; AMP from 3',5'-cyclic AMP: step 1/1. With respect to regulation, inhibited by rolipram. Functionally, hydrolyzes the second messenger cAMP, which is a key regulator of many important physiological processes. This is 3',5'-cyclic-AMP phosphodiesterase 4B from Rattus norvegicus (Rat).